The following is a 640-amino-acid chain: Probable potassium transport system protein Kup 1 (640 aa).

A run of 12 helical transmembrane segments spans residues 25–45, 65–85, 115–135, 153–173, 181–201, 227–247, 263–283, 305–325, 353–373, 381–401, 410–430, and 438–458; these read LVLA…LYAL, VVSL…VMVL, AVGW…DGVI, PALA…LFMI, VGAA…ALGL, GFAG…AEAL, WYGL…ALLL, MVAL…TAVF, IYLP…VLGF, AAFG…FAVL, WWAV…FWLA, and GGWL…CWFG.

It belongs to the HAK/KUP transporter (TC 2.A.72) family.

The protein resides in the cell inner membrane. The catalysed reaction is K(+)(in) + H(+)(in) = K(+)(out) + H(+)(out). In terms of biological role, transport of potassium into the cell. Likely operates as a K(+):H(+) symporter. This chain is Probable potassium transport system protein Kup 1, found in Chromobacterium violaceum (strain ATCC 12472 / DSM 30191 / JCM 1249 / CCUG 213 / NBRC 12614 / NCIMB 9131 / NCTC 9757 / MK).